We begin with the raw amino-acid sequence, 84 residues long: MKVTLIAILTCAAVLVLHTTAAEELEESQLMEVGMPDTELAAVDEERLFECSVSCEIEKEGNKGCKKKKCKGGWKCKFNMCVKV.

The signal sequence occupies residues 1–22 (MKVTLIAILTCAAVLVLHTTAA). A propeptide spanning residues 23–47 (EELEESQLMEVGMPDTELAAVDEER) is cleaved from the precursor. 3 disulfide bridges follow: Cys51-Cys65, Cys55-Cys76, and Cys70-Cys81.

It belongs to the neurotoxin 12 (Hwtx-2) family. 02 (Hwtx-2) subfamily. As to expression, expressed by the venom gland.

Its subcellular location is the secreted. Functionally, postsynaptic neurotoxin. The protein is U4-theraphotoxin-Hhn1b of Cyriopagopus hainanus (Chinese bird spider).